Reading from the N-terminus, the 1019-residue chain is Enteropeptidase (1019 aa).

The N-myristoyl glycine moiety is linked to residue G2. Over 2 to 18 (GSKRGISSRHHSLSSYE) the chain is Cytoplasmic. The helical; Signal-anchor for type II membrane protein transmembrane segment at 19-47 (IMFAALFAILVVLCAGLIAVSCLTIKESQ) threads the bilayer. The Extracellular portion of the chain corresponds to 48–1019 (RGAALGQSHE…FTEWIQSFLH (972 aa)). Residues 54–169 (QSHEARATFK…NSVDILDKLT (116 aa)) form the SEA domain. N-linked (GlcNAc...) asparagine glycosylation is found at N116, N147, and N179. Residues 182–223 (IECLPGSSPCTDALTCIKADLFCDGEVNCPDGSDEDNKMCAT) form the LDL-receptor class A 1 domain. 4 cysteine pairs are disulfide-bonded: C184/C197, C191/C210, C204/C221, and C225/C253. Residues 225–334 (CDGRFLLTGS…VGFNATYTAF (110 aa)) form the CUB 1 domain. Residues N328, N335, N388, N440, N470, N503, N534, and N630 are each glycosylated (N-linked (GlcNAc...) asparagine). The region spanning 342–504 (YEKINCNFED…ISLTYGICNG (163 aa)) is the MAM domain. C524 and C552 are disulfide-bonded. Residues 524–634 (CGGPFELWEP…GGFKANFTTG (111 aa)) enclose the CUB 2 domain. Residues 641–679 (EPCKADHFQCKNGECVPLVNLCDGHLHCEDGSDEADCVR) enclose the LDL-receptor class A 2 domain. 3 disulfides stabilise this stretch: C643-C655, C650-C668, and C662-C677. Residues 678–771 (VRFFNGTTNN…LIRLQCNHKS (94 aa)) enclose the SRCR domain. N-linked (GlcNAc...) asparagine glycans are attached at residues N682, N706, and N725. Cystine bridges form between C757–C767, C772–C896, and C810–C826. The 235-residue stretch at 785–1019 (IVGGSNAKEG…FTEWIQSFLH (235 aa)) folds into the Peptidase S1 domain. H825 acts as the Charge relay system in catalysis. An N-linked (GlcNAc...) asparagine glycan is attached at N848. D876 acts as the Charge relay system in catalysis. N-linked (GlcNAc...) asparagine glycosylation is found at N887, N909, and N949. Intrachain disulfides connect C910–C977, C941–C956, and C967–C995. S971 (charge relay system) is an active-site residue.

It belongs to the peptidase S1 family. As to quaternary structure, heterodimer of a catalytic (light) chain and a multidomain (heavy) chain linked by a disulfide bond. Post-translationally, the chains are derived from a single precursor that is cleaved by a trypsin-like protease. In terms of tissue distribution, intestinal brush border.

The protein localises to the membrane. It catalyses the reaction Activation of trypsinogen by selective cleavage of 6-Lys-|-Ile-7 bond.. Responsible for initiating activation of pancreatic proteolytic proenzymes (trypsin, chymotrypsin and carboxypeptidase A). It catalyzes the conversion of trypsinogen to trypsin which in turn activates other proenzymes including chymotrypsinogen, procarboxypeptidases, and proelastases. In Homo sapiens (Human), this protein is Enteropeptidase (TMPRSS15).